Consider the following 679-residue polypeptide: Stress-70 protein, mitochondrial (679 aa).

The transit peptide at 1-46 directs the protein to the mitochondrion; the sequence is MISASRAVAARLVGAAASRGPTAARHQDGWNGLSHEAFRIVSRRDY. Positions 1 to 432 are interaction with NFS1; the sequence is MISASRAVAA…IQGGVLAGDV (432 aa). Threonine 63 and asparagine 64 together coordinate ADP. The segment at 63–431 is nucleotide-binding domain (NBD); sequence TNSCVAVMEG…AIQGGVLAGD (369 aa). Lysine 76 carries the N6-acetyllysine modification. The residue at position 87 (threonine 87) is a Phosphothreonine. N6-acetyllysine; alternate is present on residues lysine 135 and lysine 138. Residues lysine 135 and lysine 138 each carry the N6-succinyllysine; alternate modification. Residue lysine 143 is modified to N6-acetyllysine. Residue lysine 206 is modified to N6-acetyllysine; alternate. Lysine 206 carries the N6-succinyllysine; alternate modification. Lysine 206 carries the post-translational modification N6-malonyllysine; alternate. 2 positions are modified to N6-acetyllysine: lysine 234 and lysine 288. The residue at position 300 (lysine 300) is an N6-acetyllysine; alternate. An N6-succinyllysine; alternate modification is found at lysine 300. ADP is bound by residues glutamate 313, lysine 316, and serine 320. Lysine 368 is subject to N6-succinyllysine. Positions 388 and 391 each coordinate ADP. An N6-succinyllysine modification is found at lysine 394. Serine 408 is modified (phosphoserine). Positions 432-441 are interdomain linker; that stretch reads VTDVLLLDVT. The tract at residues 432–679 is interaction with FXN and ISCU; sequence VTDVLLLDVT…QKEDQKEEKQ (248 aa). The interval 442 to 679 is substrate-binding domain (SBD); that stretch reads PLSLGIETLG…QKEDQKEEKQ (238 aa). Arginine 513 carries the post-translational modification Omega-N-methylarginine. N6-acetyllysine; alternate is present on residues lysine 567 and lysine 600. Lysine 567 and lysine 600 each carry N6-succinyllysine; alternate. Residue lysine 610 is modified to N6-succinyllysine. An N6-acetyllysine modification is found at lysine 612. An N6-acetyllysine; alternate modification is found at lysine 646. Lysine 646 carries the post-translational modification N6-succinyllysine; alternate. The disordered stretch occupies residues 656 to 679; it reads ASEREGSGSSGTGEQKEDQKEEKQ. Positions 669 to 679 are enriched in basic and acidic residues; it reads EQKEDQKEEKQ.

The protein belongs to the heat shock protein 70 family. Interacts strongly with the intermediate form of FXN and weakly with its mature form. Interacts with HSCB. Associates with the mitochondrial contact site and cristae organizing system (MICOS) complex, composed of at least MICOS10/MIC10, CHCHD3/MIC19, CHCHD6/MIC25, APOOL/MIC27, IMMT/MIC60, APOO/MIC23/MIC26 and QIL1/MIC13. This complex was also known under the names MINOS or MitOS complex. The MICOS complex associates with mitochondrial outer membrane proteins SAMM50, MTX1, MTX2 and DNAJC11, mitochondrial inner membrane protein TMEM11 and with HSPA9. Interacts with DNLZ, the interaction is required to prevent self-aggregation. Interacts with TESPA1. Interacts with PDPN. Interacts with NFU1, NFS1 and ISCU. Interacts with TP53; the interaction promotes TP53 degradation. Interacts (via SBD domain) with UBXN2A; the interaction with UBXN2A inhibits HSPA9/MOT-2 interaction with and degradation of TP53, thereby promotes TP53 translocation to the nucleus. Interacts with ITPR1 AND VDAC1; this interaction couples ITPR1 to VDAC1. Component of the TIM23 mitochondrial inner membrane pre-sequence translocase complex.

It is found in the mitochondrion. The protein localises to the nucleus. Its subcellular location is the nucleolus. It localises to the cytoplasm. The protein resides in the mitochondrion matrix. The catalysed reaction is ATP + H2O = ADP + phosphate + H(+). Its activity is regulated as follows. The chaperone activity is regulated by ATP-induced allosteric coupling of the nucleotide-binding (NBD) and substrate-binding (SBD) domains. ATP binding in the nucleotide-binding pocket (NBP) leads to a conformational change in the NBD, which is transferred through the interdomain linker (IDL) to the substrate-binding domain (SBD). This elicits a reduced substrate affinity and a faster substrate exchange rate. Upon hydrolysis of ATP to ADP, the protein undergoes a conformational change that increases its affinity for substrate proteins. It cycles through repeated phases of ATP hydrolysis and nucleotide exchange, facilitating repeated cycles of substrate binding and release. Functions in collaboration with co-chaperones. Functions with the co-chaperone, DNLZ, to maintain solubility and regulate ATP hydrolysis. Nucleotide exchange factors, GRPEL1 and GRPEL2, accelerate nucleotide exchange. Its function is as follows. Mitochondrial chaperone that plays a key role in mitochondrial protein import, folding, and assembly. Plays an essential role in the protein quality control system, the correct folding of proteins, the re-folding of misfolded proteins, and the targeting of proteins for subsequent degradation. These processes are achieved through cycles of ATP binding, ATP hydrolysis, and ADP release, mediated by co-chaperones. In mitochondria, it associates with the TIM (translocase of the inner membrane) protein complex to assist in the import and folding of mitochondrial proteins. Plays an important role in mitochondrial iron-sulfur cluster (ISC) biogenesis, interacts with and stabilizes ISC cluster assembly proteins FXN, NFU1, NFS1 and ISCU. Regulates erythropoiesis via stabilization of ISC assembly. Regulates mitochondrial calcium-dependent apoptosis by coupling two calcium channels, ITPR1 and VDAC1, at the mitochondria-associated endoplasmic reticulum (ER) membrane to facilitate calcium transport from the ER lumen to the mitochondria intermembrane space, providing calcium for the downstream calcium channel MCU, which releases it into the mitochondrial matrix. Although primarily located in the mitochondria, it is also found in other cellular compartments. In the cytosol, it associates with proteins involved in signaling, apoptosis, or senescence. It may play a role in cell cycle regulation via its interaction with and promotion of degradation of TP53. May play a role in the control of cell proliferation and cellular aging. Protects against reactive oxygen species (ROS). Extracellular HSPA9 plays a cytoprotective role by preventing cell lysis following immune attack by the membrane attack complex by disrupting formation of the complex. The chain is Stress-70 protein, mitochondrial from Pongo abelii (Sumatran orangutan).